The primary structure comprises 294 residues: Protein PET54 (294 aa).

It is found in the mitochondrion inner membrane. Its function is as follows. Activator of specific mitochondrial mRNAs. PET54 is involved in the excision of intron aI5-beta from pre-mRNA for cytochrome c oxidase I (COX1) and plays a role in promoting the translation of COX3. This is Protein PET54 (PET54) from Saccharomyces bayanus (Yeast).